The chain runs to 396 residues: Elongation factor Tu (396 aa).

Positions lysine 10–valine 206 constitute a tr-type G domain. Residues glycine 19–threonine 26 form a G1 region. Glycine 19 to threonine 26 provides a ligand contact to GTP. Threonine 26 lines the Mg(2+) pocket. A G2 region spans residues glycine 62 to asparagine 66. The interval aspartate 83 to glycine 86 is G3. GTP is bound by residues aspartate 83–histidine 87 and asparagine 138–aspartate 141. Residues asparagine 138–aspartate 141 form a G4 region. Positions serine 176–leucine 178 are G5.

It belongs to the TRAFAC class translation factor GTPase superfamily. Classic translation factor GTPase family. EF-Tu/EF-1A subfamily. In terms of assembly, monomer.

The protein resides in the cytoplasm. The enzyme catalyses GTP + H2O = GDP + phosphate + H(+). Its function is as follows. GTP hydrolase that promotes the GTP-dependent binding of aminoacyl-tRNA to the A-site of ribosomes during protein biosynthesis. The protein is Elongation factor Tu of Paenarthrobacter aurescens (strain TC1).